Reading from the N-terminus, the 320-residue chain is Malate dehydrogenase (320 aa).

Residues 10-15 and D34 contribute to the NAD(+) site; that span reads GAGQIG. Substrate-binding residues include R83 and R89. Residues N96 and 119–121 contribute to the NAD(+) site; that span reads ITN. 2 residues coordinate substrate: N121 and R152. H176 functions as the Proton acceptor in the catalytic mechanism.

This sequence belongs to the LDH/MDH superfamily. MDH type 3 family.

The enzyme catalyses (S)-malate + NAD(+) = oxaloacetate + NADH + H(+). Its function is as follows. Catalyzes the reversible oxidation of malate to oxaloacetate. The polypeptide is Malate dehydrogenase (Roseobacter denitrificans (strain ATCC 33942 / OCh 114) (Erythrobacter sp. (strain OCh 114))).